The primary structure comprises 482 residues: tRNA sulfurtransferase (482 aa).

Residues Leu-61–Arg-165 form the THUMP domain. ATP-binding positions include Leu-183–Ile-184, Lys-265, Gly-287, and Gln-296. Cysteines 344 and 456 form a disulfide. One can recognise a Rhodanese domain in the interval Phe-404–Pro-482. Cys-456 (cysteine persulfide intermediate) is an active-site residue.

It belongs to the ThiI family.

It is found in the cytoplasm. The enzyme catalyses [ThiI sulfur-carrier protein]-S-sulfanyl-L-cysteine + a uridine in tRNA + 2 reduced [2Fe-2S]-[ferredoxin] + ATP + H(+) = [ThiI sulfur-carrier protein]-L-cysteine + a 4-thiouridine in tRNA + 2 oxidized [2Fe-2S]-[ferredoxin] + AMP + diphosphate. It carries out the reaction [ThiS sulfur-carrier protein]-C-terminal Gly-Gly-AMP + S-sulfanyl-L-cysteinyl-[cysteine desulfurase] + AH2 = [ThiS sulfur-carrier protein]-C-terminal-Gly-aminoethanethioate + L-cysteinyl-[cysteine desulfurase] + A + AMP + 2 H(+). It functions in the pathway cofactor biosynthesis; thiamine diphosphate biosynthesis. Catalyzes the ATP-dependent transfer of a sulfur to tRNA to produce 4-thiouridine in position 8 of tRNAs, which functions as a near-UV photosensor. Also catalyzes the transfer of sulfur to the sulfur carrier protein ThiS, forming ThiS-thiocarboxylate. This is a step in the synthesis of thiazole, in the thiamine biosynthesis pathway. The sulfur is donated as persulfide by IscS. This is tRNA sulfurtransferase from Salmonella gallinarum (strain 287/91 / NCTC 13346).